The following is a 417-amino-acid chain: Tryptophan synthase beta chain (417 aa).

Lys99 carries the N6-(pyridoxal phosphate)lysine modification.

Belongs to the TrpB family. In terms of assembly, tetramer of two alpha and two beta chains. The cofactor is pyridoxal 5'-phosphate.

The catalysed reaction is (1S,2R)-1-C-(indol-3-yl)glycerol 3-phosphate + L-serine = D-glyceraldehyde 3-phosphate + L-tryptophan + H2O. It functions in the pathway amino-acid biosynthesis; L-tryptophan biosynthesis; L-tryptophan from chorismate: step 5/5. In terms of biological role, the beta subunit is responsible for the synthesis of L-tryptophan from indole and L-serine. The polypeptide is Tryptophan synthase beta chain (Corynebacterium glutamicum (strain R)).